The primary structure comprises 183 residues: Oligoribonuclease (183 aa).

Positions 8–171 constitute an Exonuclease domain; sequence LIWLDMEMTG…ADIRESIAEL (164 aa). The active site involves Tyr-129.

Belongs to the oligoribonuclease family.

Its subcellular location is the cytoplasm. Functionally, 3'-to-5' exoribonuclease specific for small oligoribonucleotides. This is Oligoribonuclease from Aromatoleum aromaticum (strain DSM 19018 / LMG 30748 / EbN1) (Azoarcus sp. (strain EbN1)).